We begin with the raw amino-acid sequence, 132 residues long: Large ribosomal subunit protein uL14 (132 aa).

This sequence belongs to the universal ribosomal protein uL14 family. In terms of assembly, part of the 50S ribosomal subunit. Forms a cluster with proteins L3 and L24e, part of which may contact the 16S rRNA in 2 intersubunit bridges.

Binds to 23S rRNA. Forms part of two intersubunit bridges in the 70S ribosome. In Methanococcus vannielii, this protein is Large ribosomal subunit protein uL14.